A 255-amino-acid chain; its full sequence is Pyrroloquinoline-quinone synthase (255 aa).

Belongs to the PqqC family.

It catalyses the reaction 6-(2-amino-2-carboxyethyl)-7,8-dioxo-1,2,3,4,7,8-hexahydroquinoline-2,4-dicarboxylate + 3 O2 = pyrroloquinoline quinone + 2 H2O2 + 2 H2O + H(+). It participates in cofactor biosynthesis; pyrroloquinoline quinone biosynthesis. In terms of biological role, ring cyclization and eight-electron oxidation of 3a-(2-amino-2-carboxyethyl)-4,5-dioxo-4,5,6,7,8,9-hexahydroquinoline-7,9-dicarboxylic-acid to PQQ. This is Pyrroloquinoline-quinone synthase from Acinetobacter baylyi (strain ATCC 33305 / BD413 / ADP1).